The sequence spans 231 residues: MKVVIVTSVASLLDASIQFQKTACRHHCNYLSMQVVKEIEEFGTINEKKLEFDTWKDVIQNDEIDAIVFYRVKQISISTGVLYESMMRNRTKPISMYFVRDCLAFDGNPPSFRMTSCNINAYNRNKIKDLIILMNMKTCNKKIIGEFIIDNFGSVDALLSIINSNVTWVTSVINNSNGRGINIRVSNNKMLTITSFRRFVNKLKMYKTTKCASQLDNLCTKMNKMGILDKK.

It belongs to the orthopoxvirus OPG058 family.

It localises to the host nucleus. The protein localises to the host nucleolus. The polypeptide is Protein OPG061 (OPG061) (Cynomys gunnisoni (Gunnison's prairie dog)).